The following is a 318-amino-acid chain: Deacetoxycephalosporin C hydroxylase (318 aa).

Residues 158–271 enclose the Fe2OG dioxygenase domain; that stretch reads DADPVLRLRY…RTSSVFFLRP (114 aa).

It belongs to the iron/ascorbate-dependent oxidoreductase family. As to quaternary structure, monomer. Requires Fe cation as cofactor.

The catalysed reaction is deacetoxycephalosporin C + 2-oxoglutarate + O2 = deacetylcephalosporin C + succinate + CO2. It functions in the pathway antibiotic biosynthesis; cephalosporin C biosynthesis. Functionally, hydroxylation of desacetoxicephalosporin C in 3'position to form deacetylcephalosporin C. The protein is Deacetoxycephalosporin C hydroxylase (cefF) of Streptomyces clavuligerus.